The following is a 100-amino-acid chain: uncharacterized protein (100 aa).

It is found in the virion. This is an uncharacterized protein from Acanthamoeba polyphaga mimivirus (APMV).